The chain runs to 91 residues: Bacterial microcompartment shell vertex protein PduN (91 aa).

The BMV domain maps to 1 to 87 (MHLARVTGAV…IDLAVVGIVD (87 aa)).

Belongs to the CcmL/EutN family. In terms of assembly, homopentamer. Interacts with shell protein PduA.

The protein resides in the bacterial microcompartment. It participates in polyol metabolism; 1,2-propanediol degradation. Its function is as follows. Probably forms vertices in the shell of the bacterial microcompartment (BMC) dedicated to 1,2-propanediol (1,2-PD) degradation. Required for structural integrity of BMCs and to mitigate propionaldehyde toxicity. Functionally, the 1,2-PD-specific bacterial microcompartment (BMC) concentrates low levels of 1,2-PD catabolic enzymes, concentrates volatile reaction intermediates thus enhancing pathway flux and keeps the level of toxic, mutagenic propionaldehyde low. This is Bacterial microcompartment shell vertex protein PduN from Salmonella typhimurium (strain LT2 / SGSC1412 / ATCC 700720).